Consider the following 196-residue polypeptide: Ribosome maturation factor RimP (196 aa).

The protein belongs to the RimP family.

The protein localises to the cytoplasm. In terms of biological role, required for maturation of 30S ribosomal subunits. This is Ribosome maturation factor RimP from Dinoroseobacter shibae (strain DSM 16493 / NCIMB 14021 / DFL 12).